The primary structure comprises 276 residues: Malectin-B (276 aa).

Positions 1-26 (MLSIRTVLGPLAAILLTVIGPFGAHG) are cleaved as a signal peptide. Residues 27–253 (SGLADKVMWA…TPNPYASDNS (227 aa)) lie on the Lumenal side of the membrane. The a carbohydrate site is built by Y67, Y89, Y116, F117, and D186. The segment at 202–249 (DVPQLQPHPGLEKKEEEEEEEEEEGSPSKKQSNKNRVQSGPRTPNPYA) is disordered. Residues 216-226 (EEEEEEEEEEG) show a composition bias toward acidic residues. Residues 229-249 (SKKQSNKNRVQSGPRTPNPYA) are compositionally biased toward polar residues. N252 carries an N-linked (GlcNAc...) asparagine glycan. A helical membrane pass occupies residues 254 to 274 (SLMFPILVAFGVFIPTLFCLC). Residues 275–276 (RL) are Cytoplasmic-facing.

It belongs to the malectin family.

It is found in the endoplasmic reticulum membrane. Carbohydrate-binding protein with a strong ligand preference for Glc2-N-glycan. May play a role in the early steps of protein N-glycosylation. Can bind di- or higher oligomers but not monomers of glucose, including maltose, maltotriose, maltotetraose, maltoheptaose, nigerose, kojibose, cellobiose and isomaltose, although based on their subcellular locations, these are unlikely to all be physiological ligands. In Xenopus laevis (African clawed frog), this protein is Malectin-B.